The chain runs to 360 residues: C-C chemokine receptor type 4 (360 aa).

The Extracellular segment spans residues 1–39 (MNPTDIADTTLDESIYSNYYLYESIPKPCTKEGIKAFGE). The helical transmembrane segment at 40 to 67 (LFLPPLYSLVFVFGLLGNSVVVLVLFKY) threads the bilayer. Topologically, residues 68–77 (KRLRSMTDVY) are cytoplasmic. The chain crosses the membrane as a helical span at residues 78–98 (LLNLAISDLLFVFSLPFWGYY). The Extracellular portion of the chain corresponds to 99–111 (AADQWVFGLGLCK). A disulfide bond links C110 and C187. A helical membrane pass occupies residues 112-133 (MISWMYLVGFYSGIFFVMLMSI). The Cytoplasmic portion of the chain corresponds to 134 to 150 (DRYLAIVHAVFSLRART). Residues 151 to 175 (LTYGVITSLATWSVAVFASLPGFLF) form a helical membrane-spanning segment. Topologically, residues 176–206 (STCYTERNHTYCKTKYSLNSTTWKVLSSLEI) are extracellular. N-linked (GlcNAc...) asparagine glycans are attached at residues N183 and N194. Residues 207–226 (NILGLVIPLGIMLFCYSMII) traverse the membrane as a helical segment. At 227–242 (RTLQHCKNEKKNKAVK) the chain is on the cytoplasmic side. The helical transmembrane segment at 243-267 (MIFAVVVLFLGFWTPYNIVLFLETL) threads the bilayer. The Extracellular segment spans residues 268-284 (VELEVLQDCTFERYLDY). Residues 285–308 (AIQATETLAFVHCCLNPIIYFFLG) traverse the membrane as a helical segment. Topologically, residues 309 to 360 (EKFRKYILQLFKTCRGLFVLCQYCGLLQIYSADTPSSSYTQSTMDHDLHDAL) are cytoplasmic.

This sequence belongs to the G-protein coupled receptor 1 family. In natural killer cells, CCL22 binding induces phosphorylation on yet undefined Ser/Thr residues, most probably by beta-adrenergic receptor kinases 1 and 2. As to expression, predominantly expressed in the thymus, in peripheral blood leukocytes, including T-cells, mostly CD4+ cells, and basophils, and in platelets; at lower levels, in the spleen and in monocytes. Detected also in macrophages, IL-2-activated natural killer cells and skin-homing memory T-cells, mostly the ones expressing the cutaneous lymphocyte antigen (CLA). Expressed in brain microvascular and coronary artery endothelial cells.

The protein localises to the cell membrane. Functionally, high affinity receptor for the C-C type chemokines CCL17/TARC, CCL22/MDC and CKLF isoform 1/CKLF1. The activity of this receptor is mediated by G(i) proteins which activate a phosphatidylinositol-calcium second messenger system. Can function as a chemoattractant homing receptor on circulating memory lymphocytes and as a coreceptor for some primary HIV-2 isolates. In the CNS, could mediate hippocampal-neuron survival. The protein is C-C chemokine receptor type 4 (CCR4) of Homo sapiens (Human).